The following is a 156-amino-acid chain: Small ribosomal subunit protein uS7 (156 aa).

The protein belongs to the universal ribosomal protein uS7 family. Part of the 30S ribosomal subunit. Contacts proteins S9 and S11.

In terms of biological role, one of the primary rRNA binding proteins, it binds directly to 16S rRNA where it nucleates assembly of the head domain of the 30S subunit. Is located at the subunit interface close to the decoding center, probably blocks exit of the E-site tRNA. In Mycobacterium tuberculosis (strain CDC 1551 / Oshkosh), this protein is Small ribosomal subunit protein uS7.